Reading from the N-terminus, the 1452-residue chain is MVKPDIHTLAHHLKQERLYVNSEKQLIQRLNADLLKTAERLYRTSWIAKQQRINLDRLILTSAEASPAECCQHAKVLEDTQFVDGYKQLGFQETAYGEFLNLLRENPRLIASCLVTGEKLNQENAQSVIHTVFTSLYGNCIMQEDESYLLQVLRYLIEFELKESDNPRRLLRKGTCAFSIIFKLFSEGLFSAKLFLTATLHEPIMQLLVEDEDHLETDPAKLIERFSPAQQEKLFGGKGTEAFRQRVQAMVETNEAKLVALVNKFIGYLKQNTYCFPHSLRWIVSQMFKTLSCVEGLEVSEVRSMCTDLLLTCFICPAIVNPEQYGIISDAPINEVARFNLMQVGRLLQQLALTGFEERDSRNKSNLNKFDKSCVAAFLDVVIGGRAVETPPLSSVNLLEGLSRTVVYMTYSQLMSLLGFMRTVISSEQLQEEDRMALENLLATVPQTKPGKSNNDTPYSTPQLSPATTPACKKNRLPIVTRSRSKTNLMETENECSPQEVTPNQPEEVLVISLGTGPQLTPGMMSENEVLNMQLVDGGQGDVPVDESKLHGKPDKTLRFSLCSDNLEGISEEEENPCSTGPSNRSNSVSSLDLEGESVSELGGGPSGSNGVEALQLLEHEQATTQDNLDDKLRKFEIRDMMGLTDDRDISETVSETWSTDVLGSDFDPNIDEDRLQEIAGAAAENMLGSLLCLPGSLLLDPCTISETTSEAWSVEVLPSDSAPDLKQEERLHELESCSGLGSTSDDTEVREVSSRPSTPGLSVVSGISATSEDIPNKTEDLRSECSSDFGGKDSVTSPEAEESVHGPHHITTPPTQSESLLAMFDPLAPASSEVVRPKVHYARPSHPPPDPPVLEGASGGNEARLPMFCSHVFIHTDSEAYRQRHSCPERLVRSRSSDIASSIRRPISDPGWVRRGINEDRELLTGTAVNALINPPQSSSFSPSKDSSRGEPDEKKDSDDERSDRNKPWWKKRFVSAMPKAPIPFRKKEKQEKEREDFVQDRFYVAVDSTSQLGPHSQAAEDILAKYRNAIKRTIPNEGSTMPYEGADPVGDGESLHESPRDEALQNMTSDDLLDSANQVAHPQESAFSYRDAKKKLRLALCSADSVAFPVLSHSTRNGLPDHTDPEDNEIVCFLKVQLAEAINLQDKNLMAQIQETMRCVSRFDSRSCSKILSSLAEDYRKRASYIAYLTRCRQGLQSTQAHLDRLLQRVLRDKEVSTRYFTTVCVRLLLESKENEIHEFIQDFQKLTAADDKTAQVEEFLQSLYGAMAQDVIWQNASEEQLQDAQIAIERSIMNRIFKLAFNPNQDADILRDQVLHEHIKRLSKVVTANHRALQIPEVYLREAPWPSAQTEIRTISAYKTPRDKVQCILRMCSTIMNLLSLANEYSVPGADDFVPVLVFVLIKANPTYLLSTVQYISSFYSNRLIGEESYWWMQFTAAVEFIKTIDDRK.

The region spanning 147–385 (SYLLQVLRYL…AAFLDVVIGG (239 aa)) is the Ras-GAP domain. 2 stretches are compositionally biased toward polar residues: residues 445-468 (VPQT…SPAT) and 577-587 (PCSTGPSNRSN). Disordered regions lie at residues 445–471 (VPQT…TTPA), 571–611 (SEEE…GSNG), 735–816 (LESC…TPPT), 885–912 (RHSC…SDPG), 929–974 (AVNA…WKKR), and 1037–1063 (PNEG…SPRD). Positions 588–601 (SVSSLDLEGESVSE) are enriched in low complexity. Positions 755–774 (SRPSTPGLSVVSGISATSED) are enriched in polar residues. 2 stretches are compositionally biased toward basic and acidic residues: residues 775 to 786 (IPNKTEDLRSEC) and 885 to 897 (RHSC…RSRS). Low complexity-rich tracts occupy residues 898 to 911 (SDIA…ISDP) and 936 to 946 (PPQSSSFSPSK). Positions 947–968 (DSSRGEPDEKKDSDDERSDRNK) are enriched in basic and acidic residues. In terms of domain architecture, VPS9 spans 1312-1452 (ILRDQVLHEH…EFIKTIDDRK (141 aa)).

The protein belongs to the GAPVD1 family.

The protein localises to the membrane. It is found in the endosome. In terms of biological role, acts both as a GTPase-activating protein (GAP) and a guanine nucleotide exchange factor (GEF), and participates in various processes such as endocytosis, insulin receptor internalization or LC2A4/GLUT4 trafficking. The sequence is that of GTPase-activating protein and VPS9 domain-containing protein 1 (gapvd1) from Xenopus laevis (African clawed frog).